The primary structure comprises 95 residues: Ribosome-binding factor A (95 aa).

The protein belongs to the RbfA family. Interacts with the 30S ribosomal subunit as a monomer, binding in a position overlapping the sites of the A and P site tRNAs, and displacing segments of the 16S rRNA. Probably contacts 16S rRNA and ribosomal protein S9 and S13.

Its subcellular location is the cytoplasm. In terms of biological role, one of several proteins that assist in the late maturation steps of the functional core of the 30S ribosomal subunit. Associates with free 30S ribosomal subunits (but not with 30S subunits that are part of 70S ribosomes or polysomes). Required for efficient processing of 16S rRNA. Probably interacts with the 5'-terminal helix region of 16S rRNA, bringing together different domains of the 30S ribosomal subunit which aids assembly. This Thermus thermophilus (strain ATCC 27634 / DSM 579 / HB8) protein is Ribosome-binding factor A.